The sequence spans 757 residues: Dolichyl-diphosphooligosaccharide--protein glycosyltransferase subunit stt-3 (757 aa).

Residues 1 to 13 lie on the Cytoplasmic side of the membrane; sequence MTSTTAARTASSR. Residues 14 to 34 form a helical membrane-spanning segment; it reads VGATTLLTIVVLALAWFVGFA. Residues 35–121 lie on the Lumenal side of the membrane; it reads SRLFAIVRFE…VHIREVCVFL (87 aa). The DXD motif 1 motif lies at 49–51; it reads EFD. Residue aspartate 51 coordinates Mn(2+). Residues 122 to 140 form a helical membrane-spanning segment; the sequence is APTFSGLTAIATYLLTKEL. Over 141–142 the chain is Cytoplasmic; the sequence is WS. A helical transmembrane segment spans residues 143-160; that stretch reads PGAGLFAACFIAISPGYT. The Lumenal portion of the chain corresponds to 161 to 171; it reads SRSVAGSYDNE. Aspartate 169 and glutamate 171 together coordinate Mn(2+). Positions 169–171 match the DXD motif 2 motif; the sequence is DNE. Residues 172–191 form a helical membrane-spanning segment; that stretch reads GIAIFALQFTYYLWVKSLKT. The Cytoplasmic segment spans residues 192–193; it reads GS. Residues 194–208 form a helical membrane-spanning segment; it reads IMWASLCALSYFYMV. Over 209–210 the chain is Lumenal; it reads SA. The next 2 membrane-spanning stretches (helical) occupy residues 211–235 and 236–261; these read WGGY…GRYS and SRLF…FVGF. Residues 262 to 269 are Lumenal-facing; that stretch reads QPVRTSEH. A helical membrane pass occupies residues 270–289; sequence MPAFGVFGLLQIVALMHYAR. Over 290 to 299 the chain is Cytoplasmic; the sequence is NRITRQQFMT. A helical transmembrane segment spans residues 300–320; that stretch reads LFVGGLTILGALSVVVYFALV. At 321–358 the chain is on the lumenal side; it reads WGGYVAPFSGRFYSLWDTGYAKIHIPIIASVSEHQPTT. The SVSE motif motif lies at 350–353; the sequence is SVSE. The chain crosses the membrane as a helical span at residues 359–381; sequence WVSFFFDLHITAAVFPVGLWYCI. Residues 382–387 lie on the Cytoplasmic side of the membrane; the sequence is KKVNDE. Residues 388-404 traverse the membrane as a helical segment; it reads RVFIILYAVSAVYFAGV. Over 405 to 408 the chain is Lumenal; the sequence is MVRL. Residue arginine 407 participates in dolichyl diphosphooligosaccharide binding. The chain crosses the membrane as a helical span at residues 409–430; sequence MLTLTPAVCVLAGIGFSYTFEK. Residues 431-469 lie on the Cytoplasmic side of the membrane; sequence YLKDEETKERSSSQSGTTKDEKLYDKAAKNVKSRNANDG. The chain crosses the membrane as a helical span at residues 470-495; the sequence is DESGVSSNVRTIISIILVIFLLMFVV. Residues 496–757 lie on the Lumenal side of the membrane; sequence HATYVTSNAY…IRPAPTASKA (262 aa). Positions 547 to 549 are interacts with target acceptor peptide in protein substrate; that stretch reads WWD. The WWDYG motif signature appears at 547–551; sequence WWDYG. Tyrosine 552 serves as a coordination point for dolichyl diphosphooligosaccharide. N-linked (GlcNAc...) asparagine glycosylation is found at asparagine 559 and asparagine 566. Asparagine 570 carries N-linked (GlcNAc...) (high mannose) asparagine glycosylation. Asparagine 584 carries N-linked (GlcNAc...) asparagine glycosylation. Positions 614–621 match the DK motif motif; the sequence is DINKFLWM. Positions 721-757 are disordered; that stretch reads RPTVKSEEATIPIKGKKATQGKNKKGVIRPAPTASKA. A compositionally biased stretch (basic residues) spans 734 to 747; the sequence is KGKKATQGKNKKGV.

Belongs to the STT3 family. As to quaternary structure, component of the oligosaccharyltransferase (OST) complex. The cofactor is Mg(2+). Requires Mn(2+) as cofactor.

Its subcellular location is the endoplasmic reticulum membrane. It carries out the reaction a di-trans,poly-cis-dolichyl diphosphooligosaccharide + L-asparaginyl-[protein] = N(4)-(oligosaccharide-(1-&gt;4)-N-acetyl-beta-D-glucosaminyl-(1-&gt;4)-N-acetyl-beta-D-glucosaminyl)-L-asparaginyl-[protein] + a di-trans,poly-cis-dolichyl diphosphate + H(+). The protein operates within protein modification; protein glycosylation. Functionally, catalytic subunit of the oligosaccharyl transferase (OST) complex that catalyzes the initial transfer of a defined glycan (Glc(3)Man(9)GlcNAc(2) in eukaryotes) from the lipid carrier dolichol-pyrophosphate to an asparagine residue within an Asn-X-Ser/Thr consensus motif in nascent polypeptide chains, the first step in protein N-glycosylation. N-glycosylation occurs cotranslationally and the complex associates with the Sec61 complex at the channel-forming translocon complex that mediates protein translocation across the endoplasmic reticulum (ER). All subunits are required for a maximal enzyme activity. This subunit contains the active site and the acceptor peptide and donor lipid-linked oligosaccharide (LLO) binding pockets. The sequence is that of Dolichyl-diphosphooligosaccharide--protein glycosyltransferase subunit stt-3 from Caenorhabditis elegans.